Reading from the N-terminus, the 86-residue chain is Mu-theraphotoxin-Hhn1b 3 (86 aa).

Residues Met-1–Ala-21 form the signal peptide. A propeptide spanning residues Ser-22 to Arg-49 is cleaved from the precursor. Intrachain disulfides connect Cys-51–Cys-66, Cys-58–Cys-73, and Cys-65–Cys-80. Residue Ile-84 is modified to Isoleucine amide.

Belongs to the neurotoxin 10 (Hwtx-1) family. 22 (Htx-4) subfamily. Monomer. In terms of tissue distribution, expressed by the venom gland.

Its subcellular location is the secreted. Functionally, neurotoxin. Selectively blocks neuronal tetrodotoxin-sensitive voltage-gated sodium channels (Nav) with an IC(50) of 44.6 nM. Does not affect tetrodotoxin-resistant voltage-gated sodium channels or calcium channels. In Cyriopagopus hainanus (Chinese bird spider), this protein is Mu-theraphotoxin-Hhn1b 3.